The sequence spans 89 residues: Small ribosomal subunit protein uS15 (89 aa).

It belongs to the universal ribosomal protein uS15 family. Part of the 30S ribosomal subunit. Forms a bridge to the 50S subunit in the 70S ribosome, contacting the 23S rRNA.

In terms of biological role, one of the primary rRNA binding proteins, it binds directly to 16S rRNA where it helps nucleate assembly of the platform of the 30S subunit by binding and bridging several RNA helices of the 16S rRNA. Functionally, forms an intersubunit bridge (bridge B4) with the 23S rRNA of the 50S subunit in the ribosome. The protein is Small ribosomal subunit protein uS15 of Chlorobaculum tepidum (strain ATCC 49652 / DSM 12025 / NBRC 103806 / TLS) (Chlorobium tepidum).